Here is a 301-residue protein sequence, read N- to C-terminus: Diaminopimelate epimerase (301 aa).

Substrate is bound by residues Asn15, Gln47, and Asn67. Cys76 serves as the catalytic Proton donor. Substrate contacts are provided by residues 77 to 78 (GN), Asn163, Asn197, and 215 to 216 (ER). Cys224 functions as the Proton acceptor in the catalytic mechanism. 225–226 (GS) serves as a coordination point for substrate.

The protein belongs to the diaminopimelate epimerase family. In terms of assembly, homodimer.

It localises to the cytoplasm. The enzyme catalyses (2S,6S)-2,6-diaminopimelate = meso-2,6-diaminopimelate. It participates in amino-acid biosynthesis; L-lysine biosynthesis via DAP pathway; DL-2,6-diaminopimelate from LL-2,6-diaminopimelate: step 1/1. Catalyzes the stereoinversion of LL-2,6-diaminopimelate (L,L-DAP) to meso-diaminopimelate (meso-DAP), a precursor of L-lysine and an essential component of the bacterial peptidoglycan. The sequence is that of Diaminopimelate epimerase from Rhizobium meliloti (strain 1021) (Ensifer meliloti).